A 305-amino-acid polypeptide reads, in one-letter code: Glyceraldehyde-3-phosphate dehydrogenase 2, cytosolic (305 aa).

NAD(+)-binding residues include D3 and R50. D-glyceraldehyde 3-phosphate-binding positions include S121–T123, T152, T181–G182, and R204. The active-site Nucleophile is the C122. NAD(+) is bound at residue N286.

This sequence belongs to the glyceraldehyde-3-phosphate dehydrogenase family. In terms of assembly, homotetramer.

The protein localises to the cytoplasm. It carries out the reaction D-glyceraldehyde 3-phosphate + phosphate + NAD(+) = (2R)-3-phospho-glyceroyl phosphate + NADH + H(+). It participates in carbohydrate degradation; glycolysis; pyruvate from D-glyceraldehyde 3-phosphate: step 1/5. In terms of biological role, key enzyme in glycolysis that catalyzes the first step of the pathway by converting D-glyceraldehyde 3-phosphate (G3P) into 3-phospho-D-glyceroyl phosphate. Essential for the maintenance of cellular ATP levels and carbohydrate metabolism. This Hordeum vulgare (Barley) protein is Glyceraldehyde-3-phosphate dehydrogenase 2, cytosolic (GAPC).